The following is a 276-amino-acid chain: Cell division protein FtsQ (276 aa).

Topologically, residues 1-27 (MSQAALNTRNSEEEVSSRRNNGTRLAG) are cytoplasmic. Residues 28 to 48 (ILFLLTVLTTVLVSGWVVLGW) form a helical membrane-spanning segment. The Periplasmic portion of the chain corresponds to 49–276 (MEDAQRLPLS…QQNQAQAEQQ (228 aa)). The POTRA domain occupies 55–126 (LPLSKLVLTG…DELKIHLVEY (72 aa)). A disordered region spans residues 255-276 (GWAPLPPEESTQQQNQAQAEQQ). Positions 266 to 276 (QQQNQAQAEQQ) are enriched in low complexity.

Belongs to the FtsQ/DivIB family. FtsQ subfamily. In terms of assembly, part of a complex composed of FtsB, FtsL and FtsQ. The complex can be formed before its localization to the division site. This tripartite complex can be divided further into a subcomplex of FtsB and FtsL, which forms in the absence of FtsQ. Interacts with FtsA, FtsK, FtsL, FtsB, FtsW, FtsI, FtsN, FtsX and YmgF.

The protein resides in the cell inner membrane. In terms of biological role, essential cell division protein. May link together the upstream cell division proteins, which are predominantly cytoplasmic, with the downstream cell division proteins, which are predominantly periplasmic. May control correct divisome assembly. The protein is Cell division protein FtsQ of Escherichia coli (strain K12).